A 288-amino-acid polypeptide reads, in one-letter code: Alpha/beta hydrolase domain-containing protein 17B (288 aa).

Active-site charge relay system residues include serine 170, aspartate 235, and histidine 264.

This sequence belongs to the AB hydrolase superfamily. ABHD17 family. Post-translationally, palmitoylated on cysteine residues located in a cysteine cluster at the N-terminus which promotes membrane localization.

It is found in the cell membrane. Its subcellular location is the recycling endosome membrane. The protein localises to the cell projection. It localises to the dendritic spine. The protein resides in the postsynaptic density membrane. The catalysed reaction is S-hexadecanoyl-L-cysteinyl-[protein] + H2O = L-cysteinyl-[protein] + hexadecanoate + H(+). In terms of biological role, hydrolyzes fatty acids from S-acylated cysteine residues in proteins. Has depalmitoylating activity towards NRAS. The chain is Alpha/beta hydrolase domain-containing protein 17B from Gallus gallus (Chicken).